We begin with the raw amino-acid sequence, 306 residues long: MLPYIVLVLGCWSVLSQAAQTDDEERAGNRRPIWIMGHMVNAIGQIDEFVNLGANSIETDVSFDDNANPEYTYHGIPCDCGRNCKKYENFNDFLKGLRSATTPGNSKYQEKLVLVVFDLKTGSLYDNQANDAGKKLAKNLLQHYWNNGNNGGRAYIVLSIPDLNHYPLIKGFKDQLTKDGHPELMDKVGHDFSGNDDIGDVGKAYKKAGITGHIWQSDGITNCLPRGLSRVNAAVANRDSANGFINKVYYWTVDKRSTTRDALDAGVDGIMTNYPDVITDVLNEAAYKKKFRVATYDENPWVTFKK.

Positions 1–18 are cleaved as a signal peptide; that stretch reads MLPYIVLVLGCWSVLSQA. Residues 19–26 constitute a propeptide that is removed on maturation; it reads AQTDDEER. The active site involves histidine 38. 2 residues coordinate Mg(2+): glutamate 58 and aspartate 60. Catalysis depends on histidine 74, which acts as the Nucleophile. Cystine bridges form between cysteine 78-cysteine 84 and cysteine 80-cysteine 223. Aspartate 118 is a binding site for Mg(2+).

The protein belongs to the arthropod phospholipase D family. Class II subfamily. Class IIa sub-subfamily. Mg(2+) serves as cofactor. Expressed by the venom gland.

Its subcellular location is the secreted. It catalyses the reaction an N-(acyl)-sphingosylphosphocholine = an N-(acyl)-sphingosyl-1,3-cyclic phosphate + choline. The enzyme catalyses an N-(acyl)-sphingosylphosphoethanolamine = an N-(acyl)-sphingosyl-1,3-cyclic phosphate + ethanolamine. The catalysed reaction is a 1-acyl-sn-glycero-3-phosphocholine = a 1-acyl-sn-glycero-2,3-cyclic phosphate + choline. It carries out the reaction a 1-acyl-sn-glycero-3-phosphoethanolamine = a 1-acyl-sn-glycero-2,3-cyclic phosphate + ethanolamine. It catalyses the reaction 1-hexadecanoyl-sn-glycero-3-phosphocholine = 1-hexadecanoyl-sn-glycero-2,3-cyclic phosphate + choline. Its activity is regulated as follows. Catalytic activity and hemolysis are inhibited by divalent ion chelators (1,10-phenanthroline, EDTA, and EGTA). Functionally, dermonecrotic toxins cleave the phosphodiester linkage between the phosphate and headgroup of certain phospholipids (sphingolipid and lysolipid substrates), forming an alcohol (often choline) and a cyclic phosphate. This toxin acts on sphingomyelin (SM) with high activity. It discriminate between the number of carbon atoms in the substrates, since it prefers SM with six carbons in the fatty acid chain (SM6:0) to other SMs (SM12:0 &gt; SM16:0 &gt; SM18:0 &gt; SM2:0 &gt; SM24:0). It also acts on lysophosphatidylcholine (LPC) (LPC16:0 = LPC12:0 &gt; LPC18:0), and lyso-platelet activating factor (LPAF, an alkyl-LPC) but not on phosphatidylcholine (PC). It may also act on ceramide phosphoethanolamine (CPE), lysophosphatidylcholine (LPC) and lysophosphatidylethanolamine (LPE), but not on lysophosphatidylserine (LPS), and lysophosphatidylglycerol (LPG). It acts by transphosphatidylation, releasing exclusively cyclic phosphate products as second products. In vivo, it induces dermonecrosis, vascular permeability, platelet aggregation, inflammatory response, edema and cytotoxicity against renal epithelial cells. It causes direct nephrotoxicity and is directly toxic to liver. It also induces hemolysis in a complement-dependent manner as well as in a complement-independent manner. The hemolysis provoked in a complement-independent manner is composed of several steps. The toxin binds to erythrocyte membranes, hydrolyzes membrane phospholipids (SM and LPC) thus generating metabolism products that cause hemolysis, probably by provoking an increase of calcium inside cells. The calcium influx is due to the opening of L-type calcium channels, since L-type calcium channel blockers inhibit calcium influx. Is lethal to mice when intraperitoneally injected. This is Dermonecrotic toxin LiSicTox-alphaIA1a from Loxosceles intermedia (Brown spider).